A 199-amino-acid chain; its full sequence is Thymidine kinase (199 aa).

Residues 9-16 (GAMSSGKS) and 93-96 (DEAQ) contribute to the ATP site. The Proton acceptor role is filled by glutamate 94. The Zn(2+) site is built by cysteine 151, cysteine 154, cysteine 188, and histidine 191.

It belongs to the thymidine kinase family. As to quaternary structure, homotetramer.

The protein localises to the cytoplasm. It carries out the reaction thymidine + ATP = dTMP + ADP + H(+). The sequence is that of Thymidine kinase from Lactobacillus johnsonii (strain CNCM I-12250 / La1 / NCC 533).